Reading from the N-terminus, the 363-residue chain is NAD(P)H-quinone oxidoreductase subunit 1, chloroplastic (363 aa).

The next 8 membrane-spanning stretches (helical) occupy residues 30–50 (LVPIVTLVLGITIGVLVIVWL), 98–118 (FSIGPSIAVISIFLSYSVIPF), 127–147 (LSIGVFFWIAISSIAPVGLLM), 165–185 (AAQSISYEIPLALCVLSISLL), 203–223 (FWGWNLWRQPIGFIVFLISSL), 248–268 (YSGIKFGLFYIASYLNLLVSS), 300–320 (VFGTLIGIFITLAKTYLFLFI), and 336–356 (LLNLGWKFLLPISLGNLLLTT).

It belongs to the complex I subunit 1 family. In terms of assembly, NDH is composed of at least 16 different subunits, 5 of which are encoded in the nucleus.

The protein resides in the plastid. The protein localises to the chloroplast thylakoid membrane. It catalyses the reaction a plastoquinone + NADH + (n+1) H(+)(in) = a plastoquinol + NAD(+) + n H(+)(out). The catalysed reaction is a plastoquinone + NADPH + (n+1) H(+)(in) = a plastoquinol + NADP(+) + n H(+)(out). In terms of biological role, NDH shuttles electrons from NAD(P)H:plastoquinone, via FMN and iron-sulfur (Fe-S) centers, to quinones in the photosynthetic chain and possibly in a chloroplast respiratory chain. The immediate electron acceptor for the enzyme in this species is believed to be plastoquinone. Couples the redox reaction to proton translocation, and thus conserves the redox energy in a proton gradient. The sequence is that of NAD(P)H-quinone oxidoreductase subunit 1, chloroplastic from Solanum bulbocastanum (Wild potato).